The following is a 695-amino-acid chain: ATP-dependent zinc metalloprotease FtsH (695 aa).

At 1 to 15 (MNNNKQPKQGNFVKN) the chain is on the cytoplasmic side. Residues 16–36 (ILMWVILAIVVVVGFNFFFSS) form a helical membrane-spanning segment. Topologically, residues 37–139 (NQSSVDKISY…QASSSGMWVQ (103 aa)) are extracellular. The chain crosses the membrane as a helical span at residues 140–160 (ILSYIIPMLLFVGIFWLMMGG). At 161–695 (MGARGGGGGG…KEKSEDETAE (535 aa)) the chain is on the cytoplasmic side. 233 to 240 (GPPGTGKT) contributes to the ATP binding site. Histidine 456 provides a ligand contact to Zn(2+). Glutamate 457 is a catalytic residue. Histidine 460 and aspartate 532 together coordinate Zn(2+). The segment at 657–695 (KDANANVDDFSNINIYNGDEKTDSKPEENKEKSEDETAE) is disordered. A compositionally biased stretch (basic and acidic residues) spans 674–695 (GDEKTDSKPEENKEKSEDETAE).

The protein in the central section; belongs to the AAA ATPase family. It in the C-terminal section; belongs to the peptidase M41 family. As to quaternary structure, homohexamer. Zn(2+) is required as a cofactor.

It is found in the cell membrane. In terms of biological role, acts as a processive, ATP-dependent zinc metallopeptidase for both cytoplasmic and membrane proteins. Plays a role in the quality control of integral membrane proteins. This Lactococcus lactis subsp. lactis (strain IL1403) (Streptococcus lactis) protein is ATP-dependent zinc metalloprotease FtsH.